Here is a 129-residue protein sequence, read N- to C-terminus: Follitropin subunit beta (129 aa).

An N-terminal signal peptide occupies residues Met-1–Ser-20. 6 disulfides stabilise this stretch: Cys-21/Cys-69, Cys-35/Cys-84, Cys-38/Cys-122, Cys-46/Cys-100, Cys-50/Cys-102, and Cys-105/Cys-112. 2 N-linked (GlcNAc...) asparagine glycosylation sites follow: Asn-25 and Asn-42.

This sequence belongs to the glycoprotein hormones subunit beta family. As to quaternary structure, heterodimer. The active follitropin is a heterodimer composed of an alpha chain/CGA shared with other hormones and a unique beta chain/FSHB shown here.

It is found in the secreted. In terms of biological role, together with the alpha chain CGA constitutes follitropin, the follicle-stimulating hormone, and provides its biological specificity to the hormone heterodimer. Binds FSHR, a G protein-coupled receptor, on target cells to activate downstream signaling pathways. Follitropin is involved in follicle development and spermatogenesis in reproductive organs. This Bos taurus (Bovine) protein is Follitropin subunit beta (FSHB).